A 373-amino-acid polypeptide reads, in one-letter code: Phospho-N-acetylmuramoyl-pentapeptide-transferase (373 aa).

Transmembrane regions (helical) follow at residues 16–36 (WWTK…AASF), 46–66 (LLSL…SWGI), 93–113 (PTMG…FVSV), 120–140 (QLLA…FDDW), 157–177 (LLLQ…QHWI), 185–205 (LGIS…VFLA), 216–236 (LDGL…VQLM), 242–262 (GNPV…GFLM), 270–290 (VFMG…VAIL), 298–318 (LVMG…VWVF), and 350–369 (MVVR…GLLL).

The protein belongs to the glycosyltransferase 4 family. MraY subfamily. Mg(2+) is required as a cofactor.

Its subcellular location is the cell inner membrane. The catalysed reaction is UDP-N-acetyl-alpha-D-muramoyl-L-alanyl-gamma-D-glutamyl-meso-2,6-diaminopimeloyl-D-alanyl-D-alanine + di-trans,octa-cis-undecaprenyl phosphate = di-trans,octa-cis-undecaprenyl diphospho-N-acetyl-alpha-D-muramoyl-L-alanyl-D-glutamyl-meso-2,6-diaminopimeloyl-D-alanyl-D-alanine + UMP. It participates in cell wall biogenesis; peptidoglycan biosynthesis. Catalyzes the initial step of the lipid cycle reactions in the biosynthesis of the cell wall peptidoglycan: transfers peptidoglycan precursor phospho-MurNAc-pentapeptide from UDP-MurNAc-pentapeptide onto the lipid carrier undecaprenyl phosphate, yielding undecaprenyl-pyrophosphoryl-MurNAc-pentapeptide, known as lipid I. The polypeptide is Phospho-N-acetylmuramoyl-pentapeptide-transferase (Prochlorococcus marinus (strain MIT 9313)).